A 180-amino-acid chain; its full sequence is Large ribosomal subunit protein uL5 (180 aa).

This sequence belongs to the universal ribosomal protein uL5 family. In terms of assembly, part of the 50S ribosomal subunit; part of the 5S rRNA/L5/L18/L25 subcomplex. Contacts the 5S rRNA and the P site tRNA. Forms a bridge to the 30S subunit in the 70S ribosome.

Functionally, this is one of the proteins that bind and probably mediate the attachment of the 5S RNA into the large ribosomal subunit, where it forms part of the central protuberance. In the 70S ribosome it contacts protein S13 of the 30S subunit (bridge B1b), connecting the 2 subunits; this bridge is implicated in subunit movement. Contacts the P site tRNA; the 5S rRNA and some of its associated proteins might help stabilize positioning of ribosome-bound tRNAs. The protein is Large ribosomal subunit protein uL5 of Clostridium tetani (strain Massachusetts / E88).